We begin with the raw amino-acid sequence, 1487 residues long: Protein clueless (1487 aa).

Disordered regions lie at residues 1 to 94 (MALE…NGDA) and 110 to 140 (GATA…EAAA). The span at 56-65 (TKKKGKKNRN) shows a compositional bias: basic residues. Positions 111 to 126 (ATAAAGATEAAAEVGS) are enriched in low complexity. At Ser-284 the chain carries Phosphoserine. A Clu domain is found at 438 to 680 (RAEDAFSSKL…RTFPPDVNFL (243 aa)). Basic and acidic residues predominate over residues 739–785 (QAEKELPSITEKQEEPEKEQAEKSSAEQPEKEKEKEKDKEDEQKESK). Disordered regions lie at residues 739-794 (QAEK…TKSA) and 980-1040 (VSSE…TAST). The segment covering 988 to 1005 (KQSRNNGGKHNKHNKSNK) has biased composition (basic residues). Positions 1009–1019 (PQSTSAAAATQ) are enriched in polar residues. Residues 1020–1040 (NGHSSTAANGSANSAANTAST) show a composition bias toward low complexity. 3 TPR repeats span residues 1140–1173 (AYNF…LNNV), 1266–1299 (ALID…NLKY), and 1301–1334 (GNKA…EKET). The disordered stretch occupies residues 1456-1487 (DTEQPKEGSEVEGATATQLTNGSEDSTTTVSS). Over residues 1470-1487 (TATQLTNGSEDSTTTVSS) the composition is skewed to polar residues.

The protein belongs to the CLU family.

The protein localises to the cytoplasm. MRNA-binding protein involved in proper cytoplasmic distribution of mitochondria. The polypeptide is Protein clueless (Drosophila mojavensis (Fruit fly)).